The sequence spans 598 residues: Elongation factor 4 (598 aa).

The 183-residue stretch at lysine 2–glutamate 184 folds into the tr-type G domain. GTP contacts are provided by residues aspartate 14–threonine 19 and asparagine 131–aspartate 134.

The protein belongs to the TRAFAC class translation factor GTPase superfamily. Classic translation factor GTPase family. LepA subfamily.

The protein resides in the cell inner membrane. It carries out the reaction GTP + H2O = GDP + phosphate + H(+). In terms of biological role, required for accurate and efficient protein synthesis under certain stress conditions. May act as a fidelity factor of the translation reaction, by catalyzing a one-codon backward translocation of tRNAs on improperly translocated ribosomes. Back-translocation proceeds from a post-translocation (POST) complex to a pre-translocation (PRE) complex, thus giving elongation factor G a second chance to translocate the tRNAs correctly. Binds to ribosomes in a GTP-dependent manner. The chain is Elongation factor 4 from Proteus mirabilis (strain HI4320).